The primary structure comprises 299 residues: Nitrogenase iron protein (299 aa).

8–15 (GKGGIGKS) serves as a coordination point for ATP. [4Fe-4S] cluster is bound at residue C96. R99 carries the ADP-ribosylarginine; by dinitrogenase reductase ADP-ribosyltransferase modification. Residue C130 coordinates [4Fe-4S] cluster.

This sequence belongs to the NifH/BchL/ChlL family. In terms of assembly, homodimer. It depends on [4Fe-4S] cluster as a cofactor. The reversible ADP-ribosylation of Arg-99 inactivates the nitrogenase reductase and regulates nitrogenase activity.

The catalysed reaction is N2 + 8 reduced [2Fe-2S]-[ferredoxin] + 16 ATP + 16 H2O = H2 + 8 oxidized [2Fe-2S]-[ferredoxin] + 2 NH4(+) + 16 ADP + 16 phosphate + 6 H(+). Functionally, the key enzymatic reactions in nitrogen fixation are catalyzed by the nitrogenase complex, which has 2 components: the iron protein and the molybdenum-iron protein. This chain is Nitrogenase iron protein, found in Gloeothece citriformis (strain PCC 7424) (Cyanothece sp. (strain PCC 7424)).